A 101-amino-acid chain; its full sequence is Small ribosomal subunit protein uS14A (101 aa).

Basic and acidic residues-rich tracts occupy residues lysine 28–alanine 44 and arginine 61–proline 70. A disordered region spans residues lysine 28–leucine 74.

Belongs to the universal ribosomal protein uS14 family. As to quaternary structure, part of the 30S ribosomal subunit. Contacts proteins S3 and S10.

Binds 16S rRNA, required for the assembly of 30S particles and may also be responsible for determining the conformation of the 16S rRNA at the A site. The polypeptide is Small ribosomal subunit protein uS14A (Rhodococcus jostii (strain RHA1)).